The primary structure comprises 367 residues: Quinolinate synthase (367 aa).

2 residues coordinate iminosuccinate: His46 and Ser63. Cys110 contacts [4Fe-4S] cluster. Iminosuccinate contacts are provided by residues 141 to 143 (YVN) and Ser162. Cys229 contacts [4Fe-4S] cluster. Iminosuccinate contacts are provided by residues 255-257 (HPE) and Thr272. Position 319 (Cys319) interacts with [4Fe-4S] cluster.

The protein belongs to the quinolinate synthase family. Type 3 subfamily. [4Fe-4S] cluster serves as cofactor.

It localises to the cytoplasm. The enzyme catalyses iminosuccinate + dihydroxyacetone phosphate = quinolinate + phosphate + 2 H2O + H(+). It participates in cofactor biosynthesis; NAD(+) biosynthesis; quinolinate from iminoaspartate: step 1/1. Functionally, catalyzes the condensation of iminoaspartate with dihydroxyacetone phosphate to form quinolinate. This chain is Quinolinate synthase, found in Bacillus velezensis (strain DSM 23117 / BGSC 10A6 / LMG 26770 / FZB42) (Bacillus amyloliquefaciens subsp. plantarum).